The following is a 343-amino-acid chain: Arginine-hydroxylase NDUFAF5, mitochondrial (343 aa).

A mitochondrion-targeting transit peptide spans 1 to 29; sequence MLRKVVLLRLCPLLGRPAVSASSGSRREV.

Belongs to the methyltransferase superfamily. As to quaternary structure, interacts with NDUFAF8, leading to stabilize NDUFAF5. Interacts with NDUFS7. Interacts with PYURF (via TRM112 domain); the interaction is direct and stabilizes NDUFAF5 protein.

The protein localises to the mitochondrion inner membrane. Its function is as follows. Arginine hydroxylase that mediates hydroxylation of 'Arg-122' of NDUFS7 and is involved in the assembly of mitochondrial NADH:ubiquinone oxidoreductase complex (complex I, MT-ND1) at early stages. May also have methyltransferase activity. This chain is Arginine-hydroxylase NDUFAF5, mitochondrial, found in Mus musculus (Mouse).